The primary structure comprises 423 residues: Pre-mRNA polyadenylation factor fip-1 (423 aa).

Residues 1-11 (MDIDEDEDFYA) show a composition bias toward acidic residues. 3 disordered regions span residues 1–178 (MDID…PVRT), 278–307 (GPGGPGVGPAGPGAMGPGGPAGAGGMGGPG), and 360–423 (PGGG…GRRW). Positions 19–61 (PPTTAATTTTPATTTTTAAPTTTTTTTSTTTASAPPTTTSSST) are enriched in low complexity. Residues 65 to 90 (DELEEGEEEDEGGGAMDEDDDSDIDI) show a composition bias toward acidic residues. The segment covering 135–146 (GTNSNSNSSSNK) has biased composition (low complexity). Gly residues predominate over residues 360 to 415 (PGGGPGGPGTGGMGPGGPGGQGGQGQQFGGGFGGNQGQGGYGGYDQMGGAGGGGRG).

The protein belongs to the FIP1 family.

The protein localises to the nucleus. Pre-mRNA polyadenylation factor that directly interacts with poly(A) polymerase. The chain is Pre-mRNA polyadenylation factor fip-1 (fip-1) from Neurospora crassa (strain ATCC 24698 / 74-OR23-1A / CBS 708.71 / DSM 1257 / FGSC 987).